The primary structure comprises 332 residues: 4-hydroxy-3-methylbut-2-enyl diphosphate reductase (332 aa).

A [4Fe-4S] cluster-binding site is contributed by C34. (2E)-4-hydroxy-3-methylbut-2-enyl diphosphate is bound by residues H63 and H96. Residues H63 and H96 each contribute to the dimethylallyl diphosphate site. 2 residues coordinate isopentenyl diphosphate: H63 and H96. Residue C118 participates in [4Fe-4S] cluster binding. A (2E)-4-hydroxy-3-methylbut-2-enyl diphosphate-binding site is contributed by H146. H146 lines the dimethylallyl diphosphate pocket. Isopentenyl diphosphate is bound at residue H146. E148 acts as the Proton donor in catalysis. T186 lines the (2E)-4-hydroxy-3-methylbut-2-enyl diphosphate pocket. C216 is a [4Fe-4S] cluster binding site. Residues S244, S245, N246, and S289 each coordinate (2E)-4-hydroxy-3-methylbut-2-enyl diphosphate. S244, S245, N246, and S289 together coordinate dimethylallyl diphosphate. Isopentenyl diphosphate-binding residues include S244, S245, N246, and S289.

This sequence belongs to the IspH family. The cofactor is [4Fe-4S] cluster.

The enzyme catalyses isopentenyl diphosphate + 2 oxidized [2Fe-2S]-[ferredoxin] + H2O = (2E)-4-hydroxy-3-methylbut-2-enyl diphosphate + 2 reduced [2Fe-2S]-[ferredoxin] + 2 H(+). The catalysed reaction is dimethylallyl diphosphate + 2 oxidized [2Fe-2S]-[ferredoxin] + H2O = (2E)-4-hydroxy-3-methylbut-2-enyl diphosphate + 2 reduced [2Fe-2S]-[ferredoxin] + 2 H(+). It participates in isoprenoid biosynthesis; dimethylallyl diphosphate biosynthesis; dimethylallyl diphosphate from (2E)-4-hydroxy-3-methylbutenyl diphosphate: step 1/1. The protein operates within isoprenoid biosynthesis; isopentenyl diphosphate biosynthesis via DXP pathway; isopentenyl diphosphate from 1-deoxy-D-xylulose 5-phosphate: step 6/6. In terms of biological role, catalyzes the conversion of 1-hydroxy-2-methyl-2-(E)-butenyl 4-diphosphate (HMBPP) into a mixture of isopentenyl diphosphate (IPP) and dimethylallyl diphosphate (DMAPP). Acts in the terminal step of the DOXP/MEP pathway for isoprenoid precursor biosynthesis. This is 4-hydroxy-3-methylbut-2-enyl diphosphate reductase from Mycolicibacterium paratuberculosis (strain ATCC BAA-968 / K-10) (Mycobacterium paratuberculosis).